The primary structure comprises 435 residues: 3-ketoacyl-CoA thiolase (435 aa).

The active-site Acyl-thioester intermediate is the Cys-98. Active-site proton acceptor residues include His-391 and Cys-421.

Belongs to the thiolase-like superfamily. Thiolase family. As to quaternary structure, heterotetramer of two alpha chains (FadJ) and two beta chains (FadI).

Its subcellular location is the cytoplasm. It carries out the reaction an acyl-CoA + acetyl-CoA = a 3-oxoacyl-CoA + CoA. It participates in lipid metabolism; fatty acid beta-oxidation. Its function is as follows. Catalyzes the final step of fatty acid oxidation in which acetyl-CoA is released and the CoA ester of a fatty acid two carbons shorter is formed. The chain is 3-ketoacyl-CoA thiolase from Vibrio cholerae serotype O1 (strain ATCC 39541 / Classical Ogawa 395 / O395).